The following is a 209-amino-acid chain: Guanylate kinase (209 aa).

One can recognise a Guanylate kinase-like domain in the interval 9-188 (GIMLVISSPS…SVHQIKCIFT (180 aa)). ATP is bound at residue 16-23 (SPSGGGKT).

The protein belongs to the guanylate kinase family.

It is found in the cytoplasm. It carries out the reaction GMP + ATP = GDP + ADP. Essential for recycling GMP and indirectly, cGMP. This Ehrlichia canis (strain Jake) protein is Guanylate kinase.